The sequence spans 115 residues: Parathyroid hormone (115 aa).

The signal sequence occupies residues 1–25 (MMSAKDMVKVMIVMLAICFLARSDG). Positions 26–31 (KSVKKR) are excised as a propeptide. The interval 51 to 69 (RVEWLRKKLQDVHNFVALG) is important for receptor binding. The disordered stretch occupies residues 77-99 (GSSQRPRKKEDNVLVESHQKSLG). Residues 84-99 (KKEDNVLVESHQKSLG) are compositionally biased toward basic and acidic residues.

Belongs to the parathyroid hormone family. In terms of assembly, interacts with PTH1R (via N-terminal extracellular domain).

The protein resides in the secreted. Functionally, parathyroid hormone elevates calcium level by dissolving the salts in bone and preventing their renal excretion. Acts by binding to its receptor, PTH1R, activating G protein-coupled receptor signaling. Stimulates [1-14C]-2-deoxy-D-glucose (2DG) transport and glycogen synthesis in osteoblastic cells. The sequence is that of Parathyroid hormone from Bos taurus (Bovine).